Here is a 582-residue protein sequence, read N- to C-terminus: MQSDIEICRNTPLSSIDVIAEKAGLLPEEFDTHGKYKAKVHPKCLARLNDNQNGKLVLVTAITPTPLGEGKTVTTIGLAQGLAKLKQSVMACIRQPSMGPVFGIKGGAAGGGYSQVAPMEELNLHLTGDIHAVTAAHNLASAALDARLFHEQREGYDAFEARTGLKALKIDVESITWKRVMDHNDRALRMVKIGLNEHGKTINGFERNEGFDISAASELMAIIALAKNLKDLRQRIGKIVVAYDLDGQPITTEDLQVAGAMAVTLKEAIAPTLMQTLEGVPTLIHAGPFANIAHGNSSIIADEIALKLSRYTVTEAGFGSDMGFEKACNIKAAAANKAPDCVVIVATLRGLKANSGHYDLRPGMAIPDSIFSPDQAALVAGFENLKWHIKNVHKYGIPAVVAINQFPQDCEQELTALQDLIHAFDPNVKVAISTAFAQGGEGTRDLAQYVVDACEKTTNFRPLYQKHQSLQEKLMSVCEAGYGATNVEMSELATKQLAHFEKLGFNELAVCIAKTPLSVTTDSSVKGAPVGFTVPIRELRLCAGAGFVYALSGSVMTMPGLPDKPAFMNLDLDEDGNIIGLS.

An ATP-binding site is contributed by 65–72 (TPLGEGKT).

It belongs to the formate--tetrahydrofolate ligase family.

The catalysed reaction is (6S)-5,6,7,8-tetrahydrofolate + formate + ATP = (6R)-10-formyltetrahydrofolate + ADP + phosphate. It functions in the pathway one-carbon metabolism; tetrahydrofolate interconversion. The polypeptide is Formate--tetrahydrofolate ligase (Vibrio parahaemolyticus serotype O3:K6 (strain RIMD 2210633)).